A 342-amino-acid chain; its full sequence is Ornithine carbamoyltransferase, catabolic (342 aa).

Residues 59 to 62 (STRT), Ser-83, Arg-110, and 137 to 140 (HPTQ) each bind carbamoyl phosphate. L-ornithine is bound by residues Asn-169, Asp-235, and 239 to 240 (SL). Carbamoyl phosphate contacts are provided by residues 276-277 (CL) and Arg-328.

This sequence belongs to the aspartate/ornithine carbamoyltransferase superfamily. OTCase family. Dodecamer (tetramer of trimers).

It is found in the cytoplasm. The catalysed reaction is carbamoyl phosphate + L-ornithine = L-citrulline + phosphate + H(+). It functions in the pathway amino-acid degradation; L-arginine degradation via ADI pathway; carbamoyl phosphate from L-arginine: step 2/2. Nvolved in the catabolism of arginine. Catalyzes the phosphorolysis of citrulline, the reverse reaction of the biosynthetic one, yielding ornithine and carbamoyl phosphate which serve to generate ATP from ADP. In Malacoplasma penetrans (strain HF-2) (Mycoplasma penetrans), this protein is Ornithine carbamoyltransferase, catabolic (arcB).